The sequence spans 133 residues: Transcription antitermination protein NusB (133 aa).

The protein belongs to the NusB family.

Functionally, involved in transcription antitermination. Required for transcription of ribosomal RNA (rRNA) genes. Binds specifically to the boxA antiterminator sequence of the ribosomal RNA (rrn) operons. The chain is Transcription antitermination protein NusB from Clostridium botulinum (strain Alaska E43 / Type E3).